Reading from the N-terminus, the 1423-residue chain is MLPRTASATRTPHLNRLVSAGSRRVLPRCSSSLGIRGSLAATPRLLSTITTQQPSPLKRQPAPRATVGFERHLATVLDEPAQTATTPLYELRSFSPQAPLTVRDHTKVYAKQRVNYHGIPGDVNEMFLVFEACLQVGRLERAAQVLKRLANLDVVPPADYLDLFNQYLDAKVSQLLQEPDVDKADDIHKAFETMVSDGRELPVGGETVALLLKASLTSTDPETMQRYVTRYLSLLPTQIALETVFNTEILTYEELTKVAELCPKYNMPDNVDPDTFAQQQQQQQQQQQQQQEQQQQQDTSIDQSEVSIEPLLTSSEPSAIPEVLGTPQKGFGLQFVKRTVSMFKDIPDGFDISTLPMSQQREIQSKLEKDCVDASLARWREENESLQKMGLNTSLDTPSLNSRLYQWQKDLETRLRTMLVEVEKSEMVSKKNKDDLDRCIYGPFIRQSNPERLAAVTIISTLSSLAMGGAHKGSTIASLITHIAKFAEEDIRVQKAEALISKRNLRKAKSKQHNPRSVLRFKNSTASAGSSDMADSNNVAVEMDDEAWTTTIRTKVGAALLSALLDTAKITLVREDPVTKTLITQNQPAFSHVMQLRKGKKIGTIIPNKAVVELLVREPVPDFLARHLPMVTPPDPWVSFEKGAYLETKTPVLRLKNGEREQRLYTEAAIARGDMDQVFKGLDVLGKTGWKINSPVFKVMLDVWNSGKQVANIPPLDPIFDLPPEPASTEDPTVKRAWLKEIKVIENERSGLHSQRCFMNFQLEIARAYRDQTFYFPHNVDFRGRAYPIPPYLNHMGADHVRGLMLFAKGKPLGESGLRWLKVHLANVYGFDKASLQERQDFADENIENIRDSVNNPLNGNQWWLQAEDPWQCLATCFELAAALELEDPTKYVSHLPIHQDGTCNGLQHYAALGGDTWGAQQVNLVPGDRPADVYSAVAKLVIKGIEDDLAKDNEFAKAMHGKITRKVVKQTVMTNVYGVTYVGARKQVLKQIEAAYPNITAESGIEAALLASYVTQHIFRAMSTMFKGAHDIQNWLGEIGGRVCRALTPEQLDEFERSERSPHGDGTASGENITLAGNPRKSSAHKNDEILNNFQSTIIWTTPLRMPVVQPYRKHGTKTVSTCMQDLVMTIPERSDPVNRRKQLQAFPPNFIHSLDASHMILSALHCDELGLTFAAVHDSFWTHASDIDSMNAVLRDAFIRIHSEDVIGRLAAEFQARYKNSLYLAKIETGTKVAQEIQRWRVRNKLGPRKELLLEKERQELLRSSNPEDVERGKKMISPASLYELYSSAEDLTVPEDLKEVTIGNLAGVEETKVRRGREMDEEGEVDGSEEAVEHEDGMHEDEMLADEPRDMDGNSGLDELSELRNTNHFALSQKRAKASIASGGKQKHYLDIWLPLVFPPIPEKGDFDVRSLKDSTYFFS.

A mitochondrion-targeting transit peptide spans 1 to 73; it reads MLPRTASATR…RATVGFERHL (73 aa). The tract at residues 266 to 303 is disordered; that stretch reads NMPDNVDPDTFAQQQQQQQQQQQQQQEQQQQQDTSIDQ. The span at 278-297 shows a compositional bias: low complexity; the sequence is QQQQQQQQQQQQQQEQQQQQ. Catalysis depends on residues D901 and K970. Basic and acidic residues predominate over residues 1055–1064; sequence EFERSERSPH. The tract at residues 1055-1087 is disordered; that stretch reads EFERSERSPHGDGTASGENITLAGNPRKSSAHK. Residue D1180 is part of the active site. The segment at 1316–1342 is disordered; sequence VRRGREMDEEGEVDGSEEAVEHEDGMH. Over residues 1322 to 1336 the composition is skewed to acidic residues; the sequence is MDEEGEVDGSEEAVE.

This sequence belongs to the phage and mitochondrial RNA polymerase family.

It is found in the mitochondrion. The enzyme catalyses RNA(n) + a ribonucleoside 5'-triphosphate = RNA(n+1) + diphosphate. Its function is as follows. DNA-dependent RNA polymerase catalyzes the transcription of DNA into RNA using the four ribonucleoside triphosphates as substrates. The sequence is that of DNA-directed RNA polymerase, mitochondrial (cyt-5) from Neurospora crassa (strain ATCC 24698 / 74-OR23-1A / CBS 708.71 / DSM 1257 / FGSC 987).